Reading from the N-terminus, the 395-residue chain is Immunity-related GTPase family M protein 2 (395 aa).

One can recognise an IRG-type G domain in the interval 63–239 (NKIKIAVTGD…PKLRETLQKD (177 aa)). GTP-binding positions include 72-79 (DSGNGMSS), 97-101 (TGVVR), and 179-181 (KLD).

Belongs to the TRAFAC class dynamin-like GTPase superfamily. IRG family. Ubiquitinated; polyubiquitinated in the cytosol, promoting Gbp1 recruitment to the T.gondii parasitophorous vacuole membranes.

The protein resides in the cytoplasmic vesicle membrane. It is found in the golgi apparatus membrane. It localises to the cytoplasm. Its subcellular location is the cytosol. The catalysed reaction is GTP + H2O = GDP + phosphate + H(+). Immunity-related GTPase that plays important roles in innate immunity and inflammatory response. Acts as a dynamin-like protein that binds to intracellular membranes and promotes remodeling and trafficking of those membranes. Required for clearance of acute protozoan and bacterial infections. Acts by participating to Tgtp1/Irgb6 and Gbp1-mediated parasite killing by promoting their accumulation on the T.gondii parasitophorous vacuole membranes. Also required for prolonged loading of ubiquitin and p62/Sqstm1 to parasitophorous vacuole membranes. Also acts as a key negative regulator of the inflammatory response by inhibiting the non-canonical inflammasome, thereby protecting against Casp11-driven septic shock during endotoxemia. The chain is Immunity-related GTPase family M protein 2 from Mus musculus (Mouse).